The chain runs to 543 residues: Protein phosphatase 1G (543 aa).

Residue Gly2 is the site of N-myristoyl glycine attachment. Position 22 is an omega-N-methylarginine (Arg22). The PPM-type phosphatase domain occupies 26–503 (PYGFSAMQGW…DNMTCIIICF (478 aa)). The Mn(2+) site is built by Asp60 and Gly61. Disordered stretches follow at residues 116–139 (QIAGRPTEDEDEKEKVADEDDVDN) and 163–326 (NCHK…SDSG). Thr122 is subject to Phosphothreonine. The span at 123–139 (EDEDEKEKVADEDDVDN) shows a compositional bias: acidic residues. Residue Ser183 is modified to Phosphoserine. Residues 259 to 310 (DSEDESDEAEEEEEDSEECSEEEDGYSSEEAENEEDEDDTEEAEEDDEEEEM) show a composition bias toward acidic residues. Lys381 carries the post-translational modification N6-acetyllysine. Mn(2+) contacts are provided by Asp439 and Asp494. The interval 508-543 (TAAPQPESGKRKLEEVLSTEGAEENGNSDKKKAKRD) is disordered. Ser525 carries the phosphoserine modification.

Belongs to the PP2C family. Interacts with NOL3; may dephosphorylate NOL3. Mg(2+) serves as cofactor. The cofactor is Mn(2+).

The protein resides in the cytoplasm. Its subcellular location is the membrane. The catalysed reaction is O-phospho-L-seryl-[protein] + H2O = L-seryl-[protein] + phosphate. It carries out the reaction O-phospho-L-threonyl-[protein] + H2O = L-threonyl-[protein] + phosphate. The chain is Protein phosphatase 1G (PPM1G) from Bos taurus (Bovine).